The sequence spans 838 residues: Periplasmic nitrate reductase (838 aa).

Residues 1–29 (MDMSRRTLLKAQAAAAAAAVAGIDLPAEA) constitute a signal peptide (tat-type signal). One can recognise a 4Fe-4S Mo/W bis-MGD-type domain in the interval 40–96 (LKWSKAPCRFCGTGCGVMVGVKDGRVVATHGDMQAEVNRGLNCVKGYFLSKIMYGAD). Residues Cys47, Cys50, Cys54, and Cys82 each contribute to the [4Fe-4S] cluster site. Mo-bis(molybdopterin guanine dinucleotide) is bound by residues Lys84, Gln151, Asn176, Cys180, 213 to 220 (WGSNMAEM), 244 to 248 (STYEH), 263 to 265 (GTD), Met374, Gln378, Asn484, 510 to 511 (SD), Lys533, Asp560, and 720 to 729 (TGRVLEHWHS). Residue Phe796 coordinates substrate. Mo-bis(molybdopterin guanine dinucleotide)-binding residues include Asn804 and Lys821.

Belongs to the prokaryotic molybdopterin-containing oxidoreductase family. NasA/NapA/NarB subfamily. Component of the periplasmic nitrate reductase NapAB complex composed of NapA and NapB. It depends on [4Fe-4S] cluster as a cofactor. Mo-bis(molybdopterin guanine dinucleotide) is required as a cofactor. Predicted to be exported by the Tat system. The position of the signal peptide cleavage has not been experimentally proven.

It is found in the periplasm. The enzyme catalyses 2 Fe(II)-[cytochrome] + nitrate + 2 H(+) = 2 Fe(III)-[cytochrome] + nitrite + H2O. Functionally, catalytic subunit of the periplasmic nitrate reductase complex NapAB. Receives electrons from NapB and catalyzes the reduction of nitrate to nitrite. This Methylobacterium sp. (strain 4-46) protein is Periplasmic nitrate reductase.